The primary structure comprises 577 residues: Urease subunit alpha (577 aa).

Positions 136–577 (GTVDCHVHLI…LPMTQRYFLF (442 aa)) constitute a Urease domain. Ni(2+) is bound by residues H141, H143, and K224. K224 carries the post-translational modification N6-carboxylysine. H226 lines the substrate pocket. Ni(2+) contacts are provided by H253 and H279. H327 acts as the Proton donor in catalysis. Residue D367 participates in Ni(2+) binding.

Belongs to the metallo-dependent hydrolases superfamily. Urease alpha subunit family. As to quaternary structure, heterotrimer of UreA (gamma), UreB (beta) and UreC (alpha) subunits. Three heterotrimers associate to form the active enzyme. It depends on Ni cation as a cofactor. Post-translationally, carboxylation allows a single lysine to coordinate two nickel ions.

The protein resides in the cytoplasm. The enzyme catalyses urea + 2 H2O + H(+) = hydrogencarbonate + 2 NH4(+). The protein operates within nitrogen metabolism; urea degradation; CO(2) and NH(3) from urea (urease route): step 1/1. The polypeptide is Urease subunit alpha (Mycobacterium bovis (strain ATCC BAA-935 / AF2122/97)).